A 766-amino-acid chain; its full sequence is 5-methyltetrahydropteroyltriglutamate--homocysteine methyltransferase (766 aa).

5-methyltetrahydropteroyltri-L-glutamate-binding positions include 16 to 19 (RELK) and Lys-117. L-homocysteine is bound by residues 442–444 (IGS) and Glu-495. L-methionine contacts are provided by residues 442 to 444 (IGS) and Glu-495. Residues 526–527 (RC) and Trp-572 contribute to the 5-methyltetrahydropteroyltri-L-glutamate site. Position 610 (Asp-610) interacts with L-homocysteine. Asp-610 serves as a coordination point for L-methionine. Residue Glu-616 coordinates 5-methyltetrahydropteroyltri-L-glutamate. Zn(2+)-binding residues include His-652, Cys-654, and Glu-676. Residue His-705 is the Proton donor of the active site. Cys-737 serves as a coordination point for Zn(2+).

The protein belongs to the vitamin-B12 independent methionine synthase family. Zn(2+) serves as cofactor.

It catalyses the reaction 5-methyltetrahydropteroyltri-L-glutamate + L-homocysteine = tetrahydropteroyltri-L-glutamate + L-methionine. It functions in the pathway amino-acid biosynthesis; L-methionine biosynthesis via de novo pathway; L-methionine from L-homocysteine (MetE route): step 1/1. Its function is as follows. Catalyzes the transfer of a methyl group from 5-methyltetrahydrofolate to homocysteine resulting in methionine formation. The protein is 5-methyltetrahydropteroyltriglutamate--homocysteine methyltransferase of Bordetella avium (strain 197N).